We begin with the raw amino-acid sequence, 317 residues long: Ceramide reductase (317 aa).

Positions 1–27 are cleaved as a signal peptide; the sequence is MATDARGVVAITGATGFLGRHLVRALA.

Belongs to the NAD(P)-dependent epimerase/dehydratase family.

The protein resides in the periplasm. It catalyses the reaction N-acyl-3-oxosphinganine + NADH + H(+) = an N-acylsphinganine + NAD(+). It participates in lipid metabolism; sphingolipid metabolism. Its function is as follows. Involved in de novo bacterial ceramide synthesis. Catalyzes the reduction of bacterial oxidized ceramides to bacterial dihydroceramides. In Caulobacter vibrioides (strain NA1000 / CB15N) (Caulobacter crescentus), this protein is Ceramide reductase.